The primary structure comprises 272 residues: Undecaprenyl-diphosphatase (272 aa).

8 consecutive transmembrane segments (helical) span residues 6-26 (SLLV…LPVS), 45-65 (AKTF…VMFW), 89-109 (LSLI…LVFH), 115-135 (LFNP…LIIA), 156-176 (AFFI…RSGA), 189-209 (YAAS…ATAL), 221-241 (ADLP…LVAI), and 251-271 (ISFI…FAVF).

Belongs to the UppP family.

It is found in the cell inner membrane. It catalyses the reaction di-trans,octa-cis-undecaprenyl diphosphate + H2O = di-trans,octa-cis-undecaprenyl phosphate + phosphate + H(+). Catalyzes the dephosphorylation of undecaprenyl diphosphate (UPP). Confers resistance to bacitracin. The chain is Undecaprenyl-diphosphatase from Cronobacter sakazakii (strain ATCC BAA-894) (Enterobacter sakazakii).